The chain runs to 288 residues: ATP synthase gamma chain (288 aa).

It belongs to the ATPase gamma chain family. In terms of assembly, F-type ATPases have 2 components, CF(1) - the catalytic core - and CF(0) - the membrane proton channel. CF(1) has five subunits: alpha(3), beta(3), gamma(1), delta(1), epsilon(1). CF(0) has three main subunits: a, b and c.

The protein resides in the cell inner membrane. Functionally, produces ATP from ADP in the presence of a proton gradient across the membrane. The gamma chain is believed to be important in regulating ATPase activity and the flow of protons through the CF(0) complex. The polypeptide is ATP synthase gamma chain (Vesicomyosocius okutanii subsp. Calyptogena okutanii (strain HA)).